Reading from the N-terminus, the 426-residue chain is D-tagatose-1,6-bisphosphate aldolase subunit KbaZ (426 aa).

The protein belongs to the GatZ/KbaZ family. KbaZ subfamily. As to quaternary structure, forms a complex with KbaY.

Its pathway is carbohydrate metabolism; D-tagatose 6-phosphate degradation; D-glyceraldehyde 3-phosphate and glycerone phosphate from D-tagatose 6-phosphate: step 2/2. Its function is as follows. Component of the tagatose-1,6-bisphosphate aldolase KbaYZ that is required for full activity and stability of the Y subunit. Could have a chaperone-like function for the proper and stable folding of KbaY. When expressed alone, KbaZ does not show any aldolase activity. The sequence is that of D-tagatose-1,6-bisphosphate aldolase subunit KbaZ from Escherichia coli O8 (strain IAI1).